Consider the following 6306-residue polypeptide: Adhesion G-protein coupled receptor V1 (6306 aa).

A signal peptide spans Met1 to Gly29. Calx-beta domains are found at residues Glu30–Thr117, Val133–Lys237, Pro262–Leu362, Lys388–Leu488, Pro645–Leu745, Asp763–Ser861, Val876–Leu979, Ala993–Leu1093, Thr1108–Val1208, Ala1444–Lys1544, Thr1564–Leu1665, Thr1710–Leu1809, Ile1850–Leu1952, Thr1966–Leu2079, Gln2107–Met2206, Val2222–Thr2324, Thr2441–Ser2541, Asn2584–Val2676, Asp2689–Leu2789, Leu2814–Thr2925, Thr2947–Thr3048, and Leu3063–Phe3172. The Extracellular segment spans residues Glu30–Ala5908. 6 EAR repeats span residues Val3255 to Gly3296, Ile3297 to Ser3345, Lys3348 to Gly3393, Ser3395 to Gly3439, Gly3441 to Met3488, and Ser3492 to Ser3534. Calx-beta domains follow at residues Asp3525–Leu3625, Ser3639–Leu3739, Gly3775–Thr3875, Ala3899–Ile4006, Val4020–Ile4123, Ile4139–Leu4239, Ala4255–Thr4354, Arg4387–Thr4489, Ser4512–Leu4612, Glu4634–Leu4734, Ser4992–Thr5095, Ala5288–Leu5332, and Ile5368–Leu5468. The GAIN-B domain maps to Ser5747 to Ser5903. Disulfide bonds link Cys5856–Cys5885 and Cys5873–Cys5887. The tract at residues Cys5856–Ser5903 is GPS. Residues Phe5909–Phe5929 traverse the membrane as a helical segment. The Cytoplasmic portion of the chain corresponds to Cys5930–Lys5939. Residues Leu5940 to Tyr5960 form a helical membrane-spanning segment. Residues Ala5961–Tyr5979 lie on the Extracellular side of the membrane. A helical transmembrane segment spans residues Leu5980–Val6000. Over Met6001–Tyr6010 the chain is Cytoplasmic. A helical transmembrane segment spans residues Leu6011 to Ile6031. The Extracellular segment spans residues Leu6032–Ala6059. Residues Ala6060–Ile6080 traverse the membrane as a helical segment. At His6081–Glu6104 the chain is on the cytoplasmic side. A helical transmembrane segment spans residues Ile6105–His6125. The Extracellular portion of the chain corresponds to Met6126–Met6133. Residues Leu6134–Ile6154 form a helical membrane-spanning segment. The Cytoplasmic segment spans residues Leu6155–Leu6306. The tract at residues Ala6216–Ser6248 is disordered. The span at Ser6217–Ser6240 shows a compositional bias: polar residues.

It belongs to the G-protein coupled receptor 2 family. Adhesion G-protein coupled receptor (ADGR) subfamily. In terms of assembly, forms a heterodimer, consisting of a large extracellular region (alpha subunit) non-covalently linked to a seven-transmembrane moiety (beta subunit). Component of USH2 complex, composed of ADGRV1, PDZD7, USH2A and WHRN. Interacts with USH2A and WHRN. Interacts (via the cytoplasmic region) with PDZD7. Interacts (via the cytoplasmic region) with MYO7A (via MyTH4-FERM domains). In terms of processing, autoproteolytically cleaved into 2 subunits, an extracellular alpha subunit and a seven-transmembrane subunit. In terms of tissue distribution, expressed at low levels in adult tissues.

It is found in the cell membrane. The protein localises to the cell projection. Its subcellular location is the stereocilium membrane. It localises to the photoreceptor inner segment. Functionally, G-protein coupled receptor which has an essential role in the development of hearing and vision. Couples to G-alpha(i)-proteins, GNAI1/2/3, G-alpha(q)-proteins, GNAQ, as well as G-alpha(s)-proteins, GNAS, inhibiting adenylate cyclase (AC) activity and cAMP production. Required for the hair bundle ankle formation, which connects growing stereocilia in developing cochlear hair cells of the inner ear. In response to extracellular calcium, activates kinases PKA and PKC to regulate myelination by inhibiting the ubiquitination of MAG, thus enhancing the stability of this protein in myelin-forming cells of the auditory pathway. In retina photoreceptors, the USH2 complex is required for the maintenance of periciliary membrane complex that seems to play a role in regulating intracellular protein transport. Involved in the regulation of bone metabolism. In terms of biological role, cleaved ADGRV1 beta-subunit couples with G-alpha(i)-proteins, GNAI1/2/3, and constitutively inhibits adenylate cyclase (AC) activity with a stronger effect than full ADGRV1. This Homo sapiens (Human) protein is Adhesion G-protein coupled receptor V1.